The sequence spans 360 residues: Phospho-N-acetylmuramoyl-pentapeptide-transferase (360 aa).

Transmembrane regions (helical) follow at residues Tyr21–Gly41, Thr73–Leu93, Thr94–Val114, Trp132–Gly152, Val168–Ser188, Gly199–Thr219, Leu239–Tyr259, Val263–Leu283, Phe288–Val308, and Val338–Lys358.

Belongs to the glycosyltransferase 4 family. MraY subfamily. Requires Mg(2+) as cofactor.

The protein resides in the cell inner membrane. The enzyme catalyses UDP-N-acetyl-alpha-D-muramoyl-L-alanyl-gamma-D-glutamyl-meso-2,6-diaminopimeloyl-D-alanyl-D-alanine + di-trans,octa-cis-undecaprenyl phosphate = di-trans,octa-cis-undecaprenyl diphospho-N-acetyl-alpha-D-muramoyl-L-alanyl-D-glutamyl-meso-2,6-diaminopimeloyl-D-alanyl-D-alanine + UMP. It participates in cell wall biogenesis; peptidoglycan biosynthesis. Functionally, catalyzes the initial step of the lipid cycle reactions in the biosynthesis of the cell wall peptidoglycan: transfers peptidoglycan precursor phospho-MurNAc-pentapeptide from UDP-MurNAc-pentapeptide onto the lipid carrier undecaprenyl phosphate, yielding undecaprenyl-pyrophosphoryl-MurNAc-pentapeptide, known as lipid I. The protein is Phospho-N-acetylmuramoyl-pentapeptide-transferase of Vibrio cholerae serotype O1 (strain ATCC 39541 / Classical Ogawa 395 / O395).